Here is a 188-residue protein sequence, read N- to C-terminus: MIKSVIAGAVAMAVVSFGAYAAPTIPQGQGKVTFNGTVVDAPCGIDAQSADQSIDFGQVSKLFLENDGESQPKSFDIKLINCDITNFKKAAGGGGAKTGTVSLTFSGVPSGPQSDMLQTVGATNTAIVVTDPHGKRVKFDGATATGVSYLVDGDNTIHFTAAVRKDGSGNPVTEGAFSAVANFNLTYQ.

An N-terminal signal peptide occupies residues 1 to 21 (MIKSVIAGAVAMAVVSFGAYA). A disulfide bridge connects residues cysteine 43 and cysteine 82.

Belongs to the fimbrial protein family.

It localises to the fimbrium. Functionally, fimbriae (also called pili), polar filaments radiating from the surface of the bacterium to a length of 0.5-1.5 micrometers and numbering 100-300 per cell, enable bacteria to colonize the epithelium of specific host organs. In Escherichia coli O6:H1 (strain CFT073 / ATCC 700928 / UPEC), this protein is F7-2 fimbrial protein (F7-2).